We begin with the raw amino-acid sequence, 992 residues long: UPF0182 protein BCG_3215c (992 aa).

7 helical membrane passes run 18–38 (ILIM…RLID), 63–83 (IVVC…GLAL), 113–133 (LVGI…AQSY), 175–195 (LVSV…FGGI), 210–230 (VQLV…YWLD), 259–279 (KLIL…AIAL), and 287–307 (IGLV…PLIV). The disordered stretch occupies residues 906 to 938 (PTEAAVPPSPAANPPPPASGPQPPPVTAAPPVP). The span at 912–938 (PPSPAANPPPPASGPQPPPVTAAPPVP) shows a compositional bias: pro residues.

It belongs to the UPF0182 family.

The protein localises to the cell membrane. This is UPF0182 protein BCG_3215c from Mycobacterium bovis (strain BCG / Pasteur 1173P2).